The sequence spans 237 residues: Sugar fermentation stimulation protein homolog (237 aa).

This sequence belongs to the SfsA family.

The sequence is that of Sugar fermentation stimulation protein homolog from Pseudomonas putida (strain GB-1).